A 125-amino-acid chain; its full sequence is Large ribosomal subunit protein bL12 (125 aa).

The protein belongs to the bacterial ribosomal protein bL12 family. In terms of assembly, homodimer. Part of the ribosomal stalk of the 50S ribosomal subunit. Forms a multimeric L10(L12)X complex, where L10 forms an elongated spine to which 2 to 4 L12 dimers bind in a sequential fashion. Binds GTP-bound translation factors.

In terms of biological role, forms part of the ribosomal stalk which helps the ribosome interact with GTP-bound translation factors. Is thus essential for accurate translation. In Rhizobium johnstonii (strain DSM 114642 / LMG 32736 / 3841) (Rhizobium leguminosarum bv. viciae), this protein is Large ribosomal subunit protein bL12.